Consider the following 301-residue polypeptide: Aquaporin NIP2-3 (301 aa).

2 consecutive transmembrane segments (helical) span residues 57–77 (VISEVVATFLLVFVTCGAASI) and 91–111 (SVAGGLIVTVMIYATGHISGA). Positions 114–116 (NPA) match the NPA 1 motif. The next 3 helical transmembrane spans lie at 132-154 (VPFYWAAQFTGAMCAAFVLKAVL), 172-192 (ALAIEIVVTFNMMFVTCAVAT), and 200-220 (LAGLAVGSAVCITSIFAGPVS). Positions 225–227 (NPA) match the NPA 2 motif. A helical membrane pass occupies residues 238–258 (VFTGLWIYFLGPVVGTLSGAW).

The protein belongs to the MIP/aquaporin (TC 1.A.8) family. NIP (TC 1.A.8.12) subfamily.

The protein resides in the membrane. Aquaporins facilitate the transport of water and small neutral solutes across cell membranes. In Zea mays (Maize), this protein is Aquaporin NIP2-3 (NIP2-3).